The sequence spans 1274 residues: Enamelin (1274 aa).

An N-terminal signal peptide occupies residues 1–38; the sequence is MLLLQCRNPTSPPKPCGLVPNVKMSLLVFLGLLGVSAA. Residues 103 to 115 are compositionally biased toward pro residues; sequence PVPNGWQQPPMPN. 5 disordered regions span residues 103–413, 476–610, 668–700, 712–734, and 753–814; these read PVPN…VGAN, IGAN…NNPN, PFQSETKKPELKHGTHQPAYPKKIPSPTRKHFP, LPPLKEDYGRQDENLRHPSYGSR, and YIKS…EEMN. Residues 117 to 127 are compositionally biased toward polar residues; that stretch reads PSKTDQTQETA. A compositionally biased stretch (low complexity) spans 128 to 142; it reads KPNQTNPQEPQPQKQ. The N-linked (GlcNAc...) asparagine glycan is linked to Asn-130. Basic and acidic residues predominate over residues 143-158; that stretch reads PLKEPPNEAARAKDDA. Positions 174-185 are enriched in pro residues; sequence YPQPPWPIPQRG. Phosphoserine occurs at positions 196 and 219. Positions 225–239 are enriched in basic and acidic residues; sequence DYEKPKEKDPPKPED. Residues 249 to 272 are compositionally biased toward polar residues; sequence ASTNSTVPDANATQSIPEGGNDTS. N-linked (GlcNAc...) asparagine glycans are attached at residues Asn-252, Asn-259, and Asn-269. Residues 273–287 are compositionally biased toward low complexity; it reads PIGNTGPGPNAGNNP. N-linked (GlcNAc...) asparagine glycosylation occurs at Asn-300. Residues 318-330 are compositionally biased toward low complexity; the sequence is PNIYENYPYPNYP. 4 stretches are compositionally biased toward polar residues: residues 331–344, 486–503, 522–549, and 565–574; these read SERQWQTTGTQGPR, SIGTNPAANKPSIGTNPA, TNPSSNQPFLRSNQASNKPFMRSNQASN, and VTVSHNMKTQ. A compositionally biased stretch (basic and acidic residues) spans 575–587; sequence NPKEKSLGQKERT. Residues 588 to 598 are compositionally biased toward polar residues; the sequence is VTPTKDASNPW. The segment covering 715 to 727 has biased composition (basic and acidic residues); it reads LKEDYGRQDENLR. A compositionally biased stretch (polar residues) spans 753–766; sequence YIKSNPWDKSSPST. The span at 787–801 shows a compositional bias: acidic residues; that stretch reads QYNEEDPIDPNEDES. Residue Asn-1066 is glycosylated (N-linked (GlcNAc...) asparagine). Disordered regions lie at residues 1071–1097 and 1109–1128; these read KLTAESPNPSPFGDGVPTVRKNTPYSG and SEASSSQPKNTPCLKSDLGG.

In terms of processing, phosphorylated by FAM20C in vitro. In terms of tissue distribution, expressed in developing teeth.

It is found in the secreted. Its subcellular location is the extracellular space. The protein localises to the extracellular matrix. Involved in the mineralization and structural organization of enamel. Involved in the extension of enamel during the secretory stage of dental enamel formation. The polypeptide is Enamelin (Enam) (Mus musculus (Mouse)).